The primary structure comprises 810 residues: Cell division control protein 48 homolog E (810 aa).

At Ser2 the chain carries N-acetylserine. Position 41 is a phosphoserine (Ser41). ATP is bound by residues 248–255 (GPPGSGKT) and 521–528 (GPPGCGKT).

This sequence belongs to the AAA ATPase family.

It localises to the nucleus. Its subcellular location is the cytoplasm. It is found in the cytoskeleton. The protein localises to the phragmoplast. In terms of biological role, probably functions in cell division and growth processes. Interacts with certain SNAREs as part of specialized membrane fusion events where vesicles from the same organelle fuse (homotypic fusion). This Arabidopsis thaliana (Mouse-ear cress) protein is Cell division control protein 48 homolog E (CDC48E).